The sequence spans 131 residues: Transcription antitermination protein NusB (131 aa).

The protein belongs to the NusB family.

Its function is as follows. Involved in transcription antitermination. Required for transcription of ribosomal RNA (rRNA) genes. Binds specifically to the boxA antiterminator sequence of the ribosomal RNA (rrn) operons. The polypeptide is Transcription antitermination protein NusB (Campylobacter fetus subsp. fetus (strain 82-40)).